A 188-amino-acid chain; its full sequence is GTPase KRas (188 aa).

GTP is bound by residues 10-18 (GAGGVGKSA), 29-35 (VDEYDPT), 59-60 (AG), and 116-119 (NKCD). The Effector region signature appears at 32–40 (YDPTIEDSY). The interval 167–188 (KEKMSKEGKKKKKKSKTKCVLM) is disordered. Cysteine methyl ester is present on Cys-185. Cys-185 is lipidated: S-farnesyl cysteine. A propeptide spans 186-188 (VLM) (removed in mature form).

Belongs to the small GTPase superfamily. Ras family.

It localises to the cell membrane. Its subcellular location is the cytoplasm. The catalysed reaction is GTP + H2O = GDP + phosphate + H(+). Its activity is regulated as follows. Alternates between an inactive form bound to GDP and an active form bound to GTP. Activated by a guanine nucleotide-exchange factor (GEF) and inactivated by a GTPase-activating protein (GAP). Its function is as follows. Ras proteins bind GDP/GTP and possess intrinsic GTPase activity. Plays an important role in the regulation of cell proliferation. May play a role in promoting oncogenic events by inducing transcriptional silencing of tumor suppressor genes (TSGs). The protein is GTPase KRas (kras) of Cyprinus carpio (Common carp).